Here is a 188-residue protein sequence, read N- to C-terminus: Nicotinamide/nicotinic acid mononucleotide adenylyltransferase (188 aa).

Belongs to the archaeal NMN adenylyltransferase family.

It catalyses the reaction beta-nicotinamide D-ribonucleotide + ATP + H(+) = diphosphate + NAD(+). It carries out the reaction nicotinate beta-D-ribonucleotide + ATP + H(+) = deamido-NAD(+) + diphosphate. The protein operates within cofactor biosynthesis; NAD(+) biosynthesis; NAD(+) from nicotinamide D-ribonucleotide: step 1/1. It functions in the pathway cofactor biosynthesis; NAD(+) biosynthesis; deamido-NAD(+) from nicotinate D-ribonucleotide: step 1/1. Functionally, dual substrate specificity enzyme that catalyzes the formation of NAD(+) from nicotinamide mononucleotide (NMN) and the formation of deamido-NAD(+) (NaAD) from nicotinate mononucleotide (NaMN). Shows nearly identical catalytic efficiency for both physiological substrates. Plays an essential role in all three routes of NAD biogenesis, de novo synthesis as well as the deamidating and nondeamidating salvage pathways. In Acinetobacter baylyi (strain ATCC 33305 / BD413 / ADP1), this protein is Nicotinamide/nicotinic acid mononucleotide adenylyltransferase.